The chain runs to 89 residues: Large ribosomal subunit protein bL31B (89 aa).

It belongs to the bacterial ribosomal protein bL31 family. Type B subfamily. Part of the 50S ribosomal subunit.

The protein is Large ribosomal subunit protein bL31B of Pseudomonas fluorescens (strain ATCC BAA-477 / NRRL B-23932 / Pf-5).